A 204-amino-acid chain; its full sequence is AFG2-interacting ribosome maturation factor (204 aa).

In terms of assembly, part of the 55LCC heterohexameric ATPase complex. Does not associate with pre-60S ribosomal particles.

The protein resides in the nucleus. It is found in the cytoplasm. In terms of biological role, part of the 55LCC heterohexameric ATPase complex which is chromatin-associated and promotes replisome proteostasis to maintain replication fork progression and genome stability. Required for replication fork progression, sister chromatid cohesion, and chromosome stability. The ATPase activity is specifically enhanced by replication fork DNA and is coupled to cysteine protease-dependent cleavage of replisome substrates in response to replication fork damage. Uses ATPase activity to process replisome substrates in S-phase, facilitating their proteolytic turnover from chromatin to ensure DNA replication and mitotic fidelity. Involved in the cytoplasmic maturation steps of pre-60S ribosomal particles by promoting the release of shuttling protein RSL24D1/RLP24 from the pre-ribosomal particles. The sequence is that of AFG2-interacting ribosome maturation factor (airim) from Xenopus tropicalis (Western clawed frog).